Here is a 456-residue protein sequence, read N- to C-terminus: Equilibrative nucleoside transporter 2 (456 aa).

Residues Leu13–Ile33 form a helical membrane-spanning segment. Asn48 and Asn57 each carry an N-linked (GlcNAc...) asparagine glycan. A run of 5 helical transmembrane segments spans residues Trp70–Tyr90, Ile99–Val119, Gly124–Leu144, Leu162–Met182, and Leu193–Leu213. An N-linked (GlcNAc...) asparagine glycan is attached at Asn225. Ser252 bears the Phosphoserine mark. The next 5 membrane-spanning stretches (helical) occupy residues Trp291–Ile311, Trp324–Gly344, Leu360–Val380, Leu386–Ser406, and Ala432–Phe452.

Belongs to the SLC29A/ENT transporter (TC 2.A.57) family. Glycosylated. As to expression, highly expressed in skeletal muscle. Expressed in liver, lung, placenta, brain, heart, kidney and ovarian tissues. Expressed in testis at the blood-brain-barrier.

The protein resides in the apical cell membrane. It is found in the basolateral cell membrane. The catalysed reaction is inosine(in) = inosine(out). It catalyses the reaction adenosine(in) = adenosine(out). It carries out the reaction uridine(out) = uridine(in). The enzyme catalyses thymidine(in) = thymidine(out). The catalysed reaction is hypoxanthine(out) = hypoxanthine(in). It catalyses the reaction adenine(out) = adenine(in). It carries out the reaction cytidine(in) = cytidine(out). The enzyme catalyses thymine(out) = thymine(in). The catalysed reaction is uracil(in) = uracil(out). It catalyses the reaction guanine(out) = guanine(in). It carries out the reaction guanosine(in) = guanosine(out). Bidirectional uniporter involved in the facilitative transport of nucleosides and nucleobases, and contributes to maintaining their cellular homeostasis. Functions as a Na(+)-independent, passive transporter. Involved in the transport of nucleosides such as inosine, adenosine, uridine, thymidine, cytidine and guanosine. Also able to transport purine nucleobases (hypoxanthine, adenine, guanine) and pyrimidine nucleobases (thymine, uracil). Involved in nucleoside transport at basolateral membrane of kidney cells, allowing liver absorption of nucleoside metabolites. Mediates apical nucleoside uptake into Sertoli cells, thereby regulating the transport of nucleosides in testis across the blood-testis-barrier. Mediates both the influx and efflux of hypoxanthine in skeletal muscle microvascular endothelial cells to control the amount of intracellular hypoxanthine available for xanthine oxidase-mediated ROS production. Functionally, non functional nucleoside transporter protein for adenosine or thymidine transport. Does not express on cell membrane. This Homo sapiens (Human) protein is Equilibrative nucleoside transporter 2.